A 333-amino-acid chain; its full sequence is Probable cytosolic iron-sulfur protein assembly protein ciao1-B (333 aa).

WD repeat units follow at residues 14–53, 59–98, 103–142, 148–187, 192–231, 246–285, and 297–333; these read HPDS…WECK, GHQR…FECL, GHEN…EYEC, SHTQ…WECR, GHTS…GGQE, FHGR…DPDQ, and AHTQ…QSGV.

The protein belongs to the WD repeat CIA1 family. Component of the CIA complex.

Key component of the cytosolic iron-sulfur protein assembly (CIA) complex, a multiprotein complex that mediates the incorporation of iron-sulfur cluster into extramitochondrial Fe/S proteins. The polypeptide is Probable cytosolic iron-sulfur protein assembly protein ciao1-B (ciao1b) (Salmo salar (Atlantic salmon)).